Here is a 144-residue protein sequence, read N- to C-terminus: Putative pre-16S rRNA nuclease (144 aa).

The protein belongs to the YqgF nuclease family.

The protein localises to the cytoplasm. Its function is as follows. Could be a nuclease involved in processing of the 5'-end of pre-16S rRNA. The sequence is that of Putative pre-16S rRNA nuclease from Acaryochloris marina (strain MBIC 11017).